Consider the following 431-residue polypeptide: Glutamate-1-semialdehyde 2,1-aminomutase (431 aa).

K269 bears the N6-(pyridoxal phosphate)lysine mark.

The protein belongs to the class-III pyridoxal-phosphate-dependent aminotransferase family. HemL subfamily. In terms of assembly, homodimer. It depends on pyridoxal 5'-phosphate as a cofactor.

Its subcellular location is the cytoplasm. The enzyme catalyses (S)-4-amino-5-oxopentanoate = 5-aminolevulinate. It participates in porphyrin-containing compound metabolism; protoporphyrin-IX biosynthesis; 5-aminolevulinate from L-glutamyl-tRNA(Glu): step 2/2. It functions in the pathway porphyrin-containing compound metabolism; chlorophyll biosynthesis. In Chlorobium limicola (strain DSM 245 / NBRC 103803 / 6330), this protein is Glutamate-1-semialdehyde 2,1-aminomutase.